A 356-amino-acid polypeptide reads, in one-letter code: Butyrate kinase (356 aa).

Belongs to the acetokinase family.

The protein resides in the cytoplasm. It catalyses the reaction butanoate + ATP = butanoyl phosphate + ADP. The protein operates within lipid metabolism; butanoate metabolism. Functionally, catalyzes the conversion of butyryl-CoA through butyryl phosphate to butyrate. The protein is Butyrate kinase (buk) of Clostridium perfringens (strain ATCC 13124 / DSM 756 / JCM 1290 / NCIMB 6125 / NCTC 8237 / Type A).